The sequence spans 276 residues: Large ribosomal subunit protein uL2 (276 aa).

Residues 224–265 (GTAMNPIDHPHGGGEGKNFGKHPVSPWGVQTKGKRTRSNKRT) form a disordered region.

Belongs to the universal ribosomal protein uL2 family. In terms of assembly, part of the 50S ribosomal subunit. Forms a bridge to the 30S subunit in the 70S ribosome.

In terms of biological role, one of the primary rRNA binding proteins. Required for association of the 30S and 50S subunits to form the 70S ribosome, for tRNA binding and peptide bond formation. It has been suggested to have peptidyltransferase activity; this is somewhat controversial. Makes several contacts with the 16S rRNA in the 70S ribosome. The sequence is that of Large ribosomal subunit protein uL2 from Blochmanniella floridana.